Consider the following 232-residue polypeptide: MNKILLVDDDRELTSLLKELLEMEGFNVIVAHDGEQALDLLDDSIDLLLLDVMMPKKNGIDTLKALRQTHQTPVIMLTARGSELDRVLGLELGADDYLPKPFNDRELVARIRAILRRSHWSEQQQNNDNGSPTLEVDALVLNPGRQEASFDGQTLELTGTEFTLLYLLAQHLGQVVSREHLSQEVLGKRLTPFDRAIDMHISNLRRKLPDRKDGHPWFKTLRGRGYLMVSAS.

The Response regulatory domain occupies 3-115; the sequence is KILLVDDDRE…ELVARIRAIL (113 aa). Aspartate 51 bears the 4-aspartylphosphate mark. Positions 131–230 form a DNA-binding region, ompR/PhoB-type; sequence SPTLEVDALV…LRGRGYLMVS (100 aa).

Phosphorylated by CpxA.

It is found in the cytoplasm. Member of the two-component regulatory system CpxA/CpxR. This system combats a variety of extracytoplasmic protein-mediated toxicities. It performs this function by increasing the synthesis of the periplasmic protease, DegP as well as that of CpxP protein. The polypeptide is Transcriptional regulatory protein CpxR (cpxR) (Escherichia coli O157:H7).